The sequence spans 592 residues: Autophagy-related protein 22-1 (592 aa).

The next 4 membrane-spanning stretches (helical) occupy residues 31–51 (YGWAAEVFVVCAMGSFLPITL), 108–128 (TASFALYTFSLSVLVQAVIII), 143–163 (LLIVFAFIGSIATMLFLVVVP), and 167–187 (LLGGLLAIISNTCFGASFVLL). Residue Asn-213 is glycosylated (N-linked (GlcNAc...) asparagine). The next 8 helical transmembrane spans lie at 271–291 (IGIGYIGAVILQVISILVVVV), 301–321 (LVLFLIGLWWFVFTIPASLWL), 364–384 (IVIFLAAWFLLSDGIATVSGT), 398–418 (AALGLINVIVMLAGVFGAFSW), 433–453 (IIACIILFELIPLYGLLGFIP), 468–490 (MYPLGALYGLVMGGLSSYCRSFF), 502–524 (FYALYAITDKGSSIFGPAIVGAI), and 534–554 (AFVFLAVLIFVPLPLMLLVDV). The tract at residues 572-592 (PQGSEYGAISDDQTTEDPIEE) is disordered.

The protein belongs to the ATG22 family.

It localises to the vacuole membrane. In terms of biological role, vacuolar effluxer which mediate the efflux of amino acids resulting from autophagic degradation. The release of autophagic amino acids allows the maintenance of protein synthesis and viability during nitrogen starvation. The protein is Autophagy-related protein 22-1 (atg22-1) of Penicillium rubens (strain ATCC 28089 / DSM 1075 / NRRL 1951 / Wisconsin 54-1255) (Penicillium chrysogenum).